Here is a 362-residue protein sequence, read N- to C-terminus: E3 ubiquitin-protein ligase TM129 (362 aa).

Residues M1–V6 are Lumenal-facing. A helical membrane pass occupies residues T7 to H27. Over S28–S56 the chain is Cytoplasmic. The helical transmembrane segment at T57 to A77 threads the bilayer. At A78–K94 the chain is on the lumenal side. The chain crosses the membrane as a helical span at residues V95–S115. The Cytoplasmic portion of the chain corresponds to Q116–R362. Residues C285 to R350 form an RING-type; degenerate zinc finger.

It belongs to the TMEM129 family. Integral component of ER-resident dislocation complexes.

The protein resides in the endoplasmic reticulum membrane. It catalyses the reaction S-ubiquitinyl-[E2 ubiquitin-conjugating enzyme]-L-cysteine + [acceptor protein]-L-lysine = [E2 ubiquitin-conjugating enzyme]-L-cysteine + N(6)-ubiquitinyl-[acceptor protein]-L-lysine.. It participates in protein modification; protein ubiquitination. Its function is as follows. E3 ubiquitin-protein ligase involved in ER-associated protein degradation, preferentially associates with the E2 enzyme UBE2J2. The chain is E3 ubiquitin-protein ligase TM129 (tmem129) from Xenopus tropicalis (Western clawed frog).